The following is a 425-amino-acid chain: Glutamate-1-semialdehyde 2,1-aminomutase (425 aa).

Lys265 carries the N6-(pyridoxal phosphate)lysine modification.

Belongs to the class-III pyridoxal-phosphate-dependent aminotransferase family. HemL subfamily. As to quaternary structure, homodimer. Pyridoxal 5'-phosphate serves as cofactor.

It localises to the cytoplasm. The enzyme catalyses (S)-4-amino-5-oxopentanoate = 5-aminolevulinate. It functions in the pathway porphyrin-containing compound metabolism; protoporphyrin-IX biosynthesis; 5-aminolevulinate from L-glutamyl-tRNA(Glu): step 2/2. This Chromobacterium violaceum (strain ATCC 12472 / DSM 30191 / JCM 1249 / CCUG 213 / NBRC 12614 / NCIMB 9131 / NCTC 9757 / MK) protein is Glutamate-1-semialdehyde 2,1-aminomutase.